A 463-amino-acid polypeptide reads, in one-letter code: Glutamyl-tRNA reductase (463 aa).

Residues 49–52 (TCNR), serine 109, 114–116 (EQQ), and glutamine 120 each bind substrate. The Nucleophile role is filled by cysteine 50. 196–201 (GAGAMS) lines the NADP(+) pocket.

It belongs to the glutamyl-tRNA reductase family. Homodimer.

It catalyses the reaction (S)-4-amino-5-oxopentanoate + tRNA(Glu) + NADP(+) = L-glutamyl-tRNA(Glu) + NADPH + H(+). Its pathway is porphyrin-containing compound metabolism; protoporphyrin-IX biosynthesis; 5-aminolevulinate from L-glutamyl-tRNA(Glu): step 1/2. Its function is as follows. Catalyzes the NADPH-dependent reduction of glutamyl-tRNA(Glu) to glutamate 1-semialdehyde (GSA). The chain is Glutamyl-tRNA reductase from Corynebacterium glutamicum (strain ATCC 13032 / DSM 20300 / JCM 1318 / BCRC 11384 / CCUG 27702 / LMG 3730 / NBRC 12168 / NCIMB 10025 / NRRL B-2784 / 534).